The sequence spans 312 residues: tRNA dimethylallyltransferase (312 aa).

Gly18–Ser25 is an ATP binding site. Thr20–Ser25 provides a ligand contact to substrate. Interaction with substrate tRNA stretches follow at residues Asp43 to Gln46 and Gln167 to Arg171.

This sequence belongs to the IPP transferase family. Monomer. The cofactor is Mg(2+).

It carries out the reaction adenosine(37) in tRNA + dimethylallyl diphosphate = N(6)-dimethylallyladenosine(37) in tRNA + diphosphate. In terms of biological role, catalyzes the transfer of a dimethylallyl group onto the adenine at position 37 in tRNAs that read codons beginning with uridine, leading to the formation of N6-(dimethylallyl)adenosine (i(6)A). The protein is tRNA dimethylallyltransferase of Azorhizobium caulinodans (strain ATCC 43989 / DSM 5975 / JCM 20966 / LMG 6465 / NBRC 14845 / NCIMB 13405 / ORS 571).